The following is a 610-amino-acid chain: Elongation factor 4 (610 aa).

Residues 14 to 198 (ANIRNFSIVA…AIVTRLPPPQ (185 aa)) form the tr-type G domain. GTP is bound by residues 26-31 (DHGKST) and 145-148 (NKVD).

This sequence belongs to the TRAFAC class translation factor GTPase superfamily. Classic translation factor GTPase family. LepA subfamily.

The protein localises to the cell inner membrane. It catalyses the reaction GTP + H2O = GDP + phosphate + H(+). In terms of biological role, required for accurate and efficient protein synthesis under certain stress conditions. May act as a fidelity factor of the translation reaction, by catalyzing a one-codon backward translocation of tRNAs on improperly translocated ribosomes. Back-translocation proceeds from a post-translocation (POST) complex to a pre-translocation (PRE) complex, thus giving elongation factor G a second chance to translocate the tRNAs correctly. Binds to ribosomes in a GTP-dependent manner. The polypeptide is Elongation factor 4 (Nitrobacter hamburgensis (strain DSM 10229 / NCIMB 13809 / X14)).